The following is a 224-amino-acid chain: LexA repressor (224 aa).

Positions 31-51 (RAEIATELGFRSANAAEEHLQ) form a DNA-binding region, H-T-H motif. Active-site for autocatalytic cleavage activity residues include S142 and K179.

It belongs to the peptidase S24 family. As to quaternary structure, homodimer.

The enzyme catalyses Hydrolysis of Ala-|-Gly bond in repressor LexA.. In terms of biological role, represses a number of genes involved in the response to DNA damage (SOS response), including recA and lexA. In the presence of single-stranded DNA, RecA interacts with LexA causing an autocatalytic cleavage which disrupts the DNA-binding part of LexA, leading to derepression of the SOS regulon and eventually DNA repair. The sequence is that of LexA repressor from Albidiferax ferrireducens (strain ATCC BAA-621 / DSM 15236 / T118) (Rhodoferax ferrireducens).